Here is a 147-residue protein sequence, read N- to C-terminus: Large ribosomal subunit protein uL15 (147 aa).

Residues 1–57 are disordered; the sequence is MDLSNLSPAPGSTKARKRLGRGPGSGNGTTAGRGNKGHNSRSGGGVRPGFEGGQMPL. Composition is skewed to gly residues over residues 21-31 and 42-52; these read RGPGSGNGTTA and SGGGVRPGFEG.

The protein belongs to the universal ribosomal protein uL15 family. Part of the 50S ribosomal subunit.

Its function is as follows. Binds to the 23S rRNA. This is Large ribosomal subunit protein uL15 from Desulfosudis oleivorans (strain DSM 6200 / JCM 39069 / Hxd3) (Desulfococcus oleovorans).